Consider the following 119-residue polypeptide: EF-hand calcium-binding domain-containing protein 2 (119 aa).

The signal sequence occupies residues 1-22 (MKVAVVLIVVLVVMMIGQETDS). An EF-hand domain is found at 82–117 (VDDNGFVEFKATYDVDGDGVVQVEEYETVVELTENL). The Ca(2+) site is built by D95, D97, D99, and E106.

Component of the acid-soluble organic matrix of calcified layers of the shell (at protein level).

The protein resides in the secreted. This chain is EF-hand calcium-binding domain-containing protein 2, found in Lottia gigantea (Giant owl limpet).